Reading from the N-terminus, the 811-residue chain is Methionine--tRNA ligase (811 aa).

The short motif at 11 to 21 (PYVNNVPHLGN) is the 'HIGH' region element. Residues C142, C145, C155, and C158 each contribute to the Zn(2+) site. The 'KMSKS' region signature appears at 344-348 (KFSKS). K347 serves as a coordination point for ATP. A disordered region spans residues 606 to 640 (GVSVPRTAQMPTGMNKKETDAQQKKEEREMPPPSD). Over residues 620-635 (NKKETDAQQKKEEREM) the composition is skewed to basic and acidic residues. Residues 648–753 (FSERVVLKVA…PWALPGERAT (106 aa)) form the tRNA-binding domain.

Belongs to the class-I aminoacyl-tRNA synthetase family. MetG type 1 subfamily. As to quaternary structure, homodimer. Zn(2+) is required as a cofactor.

The protein resides in the cytoplasm. The catalysed reaction is tRNA(Met) + L-methionine + ATP = L-methionyl-tRNA(Met) + AMP + diphosphate. Functionally, is required not only for elongation of protein synthesis but also for the initiation of all mRNA translation through initiator tRNA(fMet) aminoacylation. This is Methionine--tRNA ligase from Treponema pallidum (strain Nichols).